Consider the following 186-residue polypeptide: Peptide deformylase (186 aa).

2 residues coordinate Fe cation: Cys-113 and His-157. Residue Glu-158 is part of the active site. Residue His-161 coordinates Fe cation.

Belongs to the polypeptide deformylase family. Fe(2+) is required as a cofactor.

The catalysed reaction is N-terminal N-formyl-L-methionyl-[peptide] + H2O = N-terminal L-methionyl-[peptide] + formate. In terms of biological role, removes the formyl group from the N-terminal Met of newly synthesized proteins. Requires at least a dipeptide for an efficient rate of reaction. N-terminal L-methionine is a prerequisite for activity but the enzyme has broad specificity at other positions. The chain is Peptide deformylase from Malacoplasma penetrans (strain HF-2) (Mycoplasma penetrans).